The chain runs to 317 residues: Probable deoxyhypusine synthase 1 (317 aa).

Lys285 acts as the Nucleophile in catalysis.

It belongs to the deoxyhypusine synthase family. It depends on NAD(+) as a cofactor.

The enzyme catalyses [eIF5A protein]-L-lysine + spermidine = [eIF5A protein]-deoxyhypusine + propane-1,3-diamine. It functions in the pathway protein modification; eIF5A hypusination. Functionally, catalyzes the NAD-dependent oxidative cleavage of spermidine and the subsequent transfer of the butylamine moiety of spermidine to the epsilon-amino group of a specific lysine residue of the eIF-5A precursor protein to form the intermediate deoxyhypusine residue. In Methanosarcina acetivorans (strain ATCC 35395 / DSM 2834 / JCM 12185 / C2A), this protein is Probable deoxyhypusine synthase 1 (dys1).